Reading from the N-terminus, the 391-residue chain is Polyketide synthase 5 (391 aa).

Cys164 is a catalytic residue.

Belongs to the thiolase-like superfamily. Chalcone/stilbene synthases family. Homodimer. In terms of tissue distribution, expressed in fruits.

The catalysed reaction is (E)-4-coumaroyl-CoA + 3 malonyl-CoA + 3 H(+) = 2',4,4',6'-tetrahydroxychalcone + 3 CO2 + 4 CoA. It functions in the pathway secondary metabolite biosynthesis; flavonoid biosynthesis. Polyketide synthase producing naringenin chalcone. Can use p-coumaryl-CoA as substrate. This Rubus idaeus (Raspberry) protein is Polyketide synthase 5 (PKS5).